The following is a 228-amino-acid chain: Cytochrome c oxidase subunit 2 (228 aa).

Over 1–26 (MSTWANLGLQDSASPLMEQLIFFHDH) the chain is Mitochondrial intermembrane. A helical membrane pass occupies residues 27-48 (ALLILVMITVLVGYLMFMLFFN). Residues 49 to 62 (NYVNRFLLHGQLIE) are Mitochondrial matrix-facing. A helical transmembrane segment spans residues 63-82 (MIWTILPAIILLFIALPSLR). Over 83–228 (LLYLLDEINE…FIKWISSNNS (146 aa)) the chain is Mitochondrial intermembrane. Cu cation contacts are provided by H161, C196, E198, C200, H204, and M207. Mg(2+) is bound at residue E198.

This sequence belongs to the cytochrome c oxidase subunit 2 family. Component of the cytochrome c oxidase (complex IV, CIV), a multisubunit enzyme composed of a catalytic core of 3 subunits and several supernumerary subunits. The complex exists as a monomer or a dimer and forms supercomplexes (SCs) in the inner mitochondrial membrane with ubiquinol-cytochrome c oxidoreductase (cytochrome b-c1 complex, complex III, CIII). Cu cation is required as a cofactor.

The protein resides in the mitochondrion inner membrane. The catalysed reaction is 4 Fe(II)-[cytochrome c] + O2 + 8 H(+)(in) = 4 Fe(III)-[cytochrome c] + 2 H2O + 4 H(+)(out). In terms of biological role, component of the cytochrome c oxidase, the last enzyme in the mitochondrial electron transport chain which drives oxidative phosphorylation. The respiratory chain contains 3 multisubunit complexes succinate dehydrogenase (complex II, CII), ubiquinol-cytochrome c oxidoreductase (cytochrome b-c1 complex, complex III, CIII) and cytochrome c oxidase (complex IV, CIV), that cooperate to transfer electrons derived from NADH and succinate to molecular oxygen, creating an electrochemical gradient over the inner membrane that drives transmembrane transport and the ATP synthase. Cytochrome c oxidase is the component of the respiratory chain that catalyzes the reduction of oxygen to water. Electrons originating from reduced cytochrome c in the intermembrane space (IMS) are transferred via the dinuclear copper A center (CU(A)) of subunit 2 and heme A of subunit 1 to the active site in subunit 1, a binuclear center (BNC) formed by heme A3 and copper B (CU(B)). The BNC reduces molecular oxygen to 2 water molecules using 4 electrons from cytochrome c in the IMS and 4 protons from the mitochondrial matrix. The chain is Cytochrome c oxidase subunit 2 (mt:CoII) from Drosophila melanogaster (Fruit fly).